Here is a 353-residue protein sequence, read N- to C-terminus: Photosystem II protein D1 (353 aa).

Residue Thr-2 is modified to N-acetylthreonine. A Phosphothreonine modification is found at Thr-2. The next 3 membrane-spanning stretches (helical) occupy residues 29–46, 118–133, and 142–156; these read YIGW…TATS, HFLL…EWEL, and WIAV…AATA. His-118 contributes to the chlorophyll a binding site. A pheophytin a-binding site is contributed by Tyr-126. Positions 170 and 189 each coordinate [CaMn4O5] cluster. Residues 197–218 traverse the membrane as a helical segment; sequence FHMLGVAGVFGGSLFSAMHGSL. Residue His-198 coordinates chlorophyll a. Residues His-215 and 264-265 contribute to the a quinone site; that span reads SF. A Fe cation-binding site is contributed by His-215. His-272 provides a ligand contact to Fe cation. Residues 274-288 form a helical membrane-spanning segment; it reads FLAAWPVVGIWFTAL. His-332, Glu-333, Asp-342, and Ala-344 together coordinate [CaMn4O5] cluster. Positions 345-353 are excised as a propeptide; that stretch reads AVEAPSTNG.

It belongs to the reaction center PufL/M/PsbA/D family. In terms of assembly, PSII is composed of 1 copy each of membrane proteins PsbA, PsbB, PsbC, PsbD, PsbE, PsbF, PsbH, PsbI, PsbJ, PsbK, PsbL, PsbM, PsbT, PsbX, PsbY, PsbZ, Psb30/Ycf12, at least 3 peripheral proteins of the oxygen-evolving complex and a large number of cofactors. It forms dimeric complexes. The D1/D2 heterodimer binds P680, chlorophylls that are the primary electron donor of PSII, and subsequent electron acceptors. It shares a non-heme iron and each subunit binds pheophytin, quinone, additional chlorophylls, carotenoids and lipids. D1 provides most of the ligands for the Mn4-Ca-O5 cluster of the oxygen-evolving complex (OEC). There is also a Cl(-1) ion associated with D1 and D2, which is required for oxygen evolution. The PSII complex binds additional chlorophylls, carotenoids and specific lipids. serves as cofactor. Post-translationally, tyr-161 forms a radical intermediate that is referred to as redox-active TyrZ, YZ or Y-Z. C-terminally processed by CTPA; processing is essential to allow assembly of the oxygen-evolving complex and thus photosynthetic growth.

The protein resides in the plastid. It localises to the chloroplast thylakoid membrane. It catalyses the reaction 2 a plastoquinone + 4 hnu + 2 H2O = 2 a plastoquinol + O2. Photosystem II (PSII) is a light-driven water:plastoquinone oxidoreductase that uses light energy to abstract electrons from H(2)O, generating O(2) and a proton gradient subsequently used for ATP formation. It consists of a core antenna complex that captures photons, and an electron transfer chain that converts photonic excitation into a charge separation. The D1/D2 (PsbA/PsbD) reaction center heterodimer binds P680, the primary electron donor of PSII as well as several subsequent electron acceptors. This chain is Photosystem II protein D1, found in Lepidium virginicum (Virginia pepperweed).